The following is a 347-amino-acid chain: NADH-ubiquinone oxidoreductase chain 2 (347 aa).

A run of 10 helical transmembrane segments spans residues 13-33 (IFTG…WVGL), 60-80 (FLTQ…NSML), 96-116 (LMIM…FWVP), 123-143 (PLMS…SIMY), 149-169 (LNVN…SWGG), 178-198 (ILAY…PYNP), 201-221 (TILN…LLNL), 247-267 (TLLS…WVII), 274-294 (NSLI…YFYL), and 326-346 (LPTL…MLMI).

It belongs to the complex I subunit 2 family. In terms of assembly, core subunit of respiratory chain NADH dehydrogenase (Complex I) which is composed of 45 different subunits. Interacts with TMEM242.

The protein localises to the mitochondrion inner membrane. The catalysed reaction is a ubiquinone + NADH + 5 H(+)(in) = a ubiquinol + NAD(+) + 4 H(+)(out). In terms of biological role, core subunit of the mitochondrial membrane respiratory chain NADH dehydrogenase (Complex I) which catalyzes electron transfer from NADH through the respiratory chain, using ubiquinone as an electron acceptor. Essential for the catalytic activity and assembly of complex I. In Pan troglodytes (Chimpanzee), this protein is NADH-ubiquinone oxidoreductase chain 2.